The primary structure comprises 107 residues: UPF0122 protein MYPE4850 (107 aa).

The protein belongs to the UPF0122 family.

Functionally, might take part in the signal recognition particle (SRP) pathway. This is inferred from the conservation of its genetic proximity to ftsY/ffh. May be a regulatory protein. The polypeptide is UPF0122 protein MYPE4850 (Malacoplasma penetrans (strain HF-2) (Mycoplasma penetrans)).